The chain runs to 66 residues: Large ribosomal subunit protein bL35 (66 aa).

The protein belongs to the bacterial ribosomal protein bL35 family.

This is Large ribosomal subunit protein bL35 from Leptospira biflexa serovar Patoc (strain Patoc 1 / Ames).